The primary structure comprises 189 residues: UPF0301 protein RF_0044 (189 aa).

Belongs to the UPF0301 (AlgH) family.

The polypeptide is UPF0301 protein RF_0044 (Rickettsia felis (strain ATCC VR-1525 / URRWXCal2) (Rickettsia azadi)).